The chain runs to 87 residues: Large ribosomal subunit protein bL27 (87 aa).

The protein belongs to the bacterial ribosomal protein bL27 family.

The protein is Large ribosomal subunit protein bL27 of Wigglesworthia glossinidia brevipalpis.